Reading from the N-terminus, the 383-residue chain is Chaperone protein DnaJ (383 aa).

The 66-residue stretch at 5-70 folds into the J domain; sequence DYYELLGVSR…QKRAAYDRFG (66 aa). The segment at 140–219 adopts a CR-type zinc-finger fold; that stretch reads GTKTEIRVPT…CSGAGTVPRE (80 aa). Residues C153, C156, C171, C174, C193, C196, C207, and C210 each contribute to the Zn(2+) site. CXXCXGXG motif repeat units follow at residues 153–160, 171–178, 193–200, and 207–214; these read CDACSGTG, CPTCGGAG, and CRVCSGAG.

It belongs to the DnaJ family. In terms of assembly, homodimer. It depends on Zn(2+) as a cofactor.

It localises to the cytoplasm. In terms of biological role, participates actively in the response to hyperosmotic and heat shock by preventing the aggregation of stress-denatured proteins and by disaggregating proteins, also in an autonomous, DnaK-independent fashion. Unfolded proteins bind initially to DnaJ; upon interaction with the DnaJ-bound protein, DnaK hydrolyzes its bound ATP, resulting in the formation of a stable complex. GrpE releases ADP from DnaK; ATP binding to DnaK triggers the release of the substrate protein, thus completing the reaction cycle. Several rounds of ATP-dependent interactions between DnaJ, DnaK and GrpE are required for fully efficient folding. Also involved, together with DnaK and GrpE, in the DNA replication of plasmids through activation of initiation proteins. This Acidiphilium cryptum (strain JF-5) protein is Chaperone protein DnaJ.